Consider the following 237-residue polypeptide: MDNGDWGHRLTHPVTLNVGGHLYTTSISTLQRYPDSMLGAMFRGDFPTTRDAQGNYFIDRDGTLFRYILNFLRTSELTLPVDFTELDLLRKEADFYQIEPLIQCLNDPKPLYPLDTFEQVVELSSTRKLSKYSNPVAVIITQLTITTKVHSLLEGISNNFTKWNKHMMDTRDCQVSFTFGPCDYHQEVSLRVHLMDYITKQGFTIRNTRVHHMSERANENTVEHHWTFCRLAYKVED.

In terms of domain architecture, BTB spans 12-81 (HPVTLNVGGH…LRTSELTLPV (70 aa)).

As to quaternary structure, homopentamer. May be part of a cullin-containing E3 ubiquitin-protein ligase complex.

Its pathway is protein modification; protein ubiquitination. In terms of biological role, probable substrate-specific adapter of a cullin-containing E3 ubiquitin-protein ligase complex mediating the ubiquitination and subsequent proteasomal degradation of target proteins. The polypeptide is BTB/POZ domain-containing protein KCTD6 (kctd6) (Danio rerio (Zebrafish)).